The chain runs to 657 residues: UvrABC system protein B (657 aa).

Residues 25–182 (NSIKSNNRAQ…KKLIEIQYER (158 aa)) form the Helicase ATP-binding domain. 38–45 (GVTGSGKT) is a binding site for ATP. Positions 91 to 114 (YYDYYQPEAYVPQTDTFIEKDASI) match the Beta-hairpin motif. The region spanning 429–595 (QIDDLYGEIN…TIIKDVRDII (167 aa)) is the Helicase C-terminal domain. A UVR domain is found at 621-656 (DKLIKDLTEEMLLAAKNLQFERAAELRDIINEIKDG).

This sequence belongs to the UvrB family. In terms of assembly, forms a heterotetramer with UvrA during the search for lesions. Interacts with UvrC in an incision complex.

The protein localises to the cytoplasm. Functionally, the UvrABC repair system catalyzes the recognition and processing of DNA lesions. A damage recognition complex composed of 2 UvrA and 2 UvrB subunits scans DNA for abnormalities. Upon binding of the UvrA(2)B(2) complex to a putative damaged site, the DNA wraps around one UvrB monomer. DNA wrap is dependent on ATP binding by UvrB and probably causes local melting of the DNA helix, facilitating insertion of UvrB beta-hairpin between the DNA strands. Then UvrB probes one DNA strand for the presence of a lesion. If a lesion is found the UvrA subunits dissociate and the UvrB-DNA preincision complex is formed. This complex is subsequently bound by UvrC and the second UvrB is released. If no lesion is found, the DNA wraps around the other UvrB subunit that will check the other stand for damage. The chain is UvrABC system protein B from Clostridium beijerinckii (strain ATCC 51743 / NCIMB 8052) (Clostridium acetobutylicum).